A 249-amino-acid polypeptide reads, in one-letter code: 2,3-bisphosphoglycerate-dependent phosphoglycerate mutase (249 aa).

Substrate is bound by residues 8–15, 21–22, R60, 87–90, K98, 114–115, and 183–184; these read RHGESTWN, TG, ERHY, RR, and GN. H9 serves as the catalytic Tele-phosphohistidine intermediate. The active-site Proton donor/acceptor is the E87.

The protein belongs to the phosphoglycerate mutase family. BPG-dependent PGAM subfamily. As to quaternary structure, homodimer.

It catalyses the reaction (2R)-2-phosphoglycerate = (2R)-3-phosphoglycerate. It functions in the pathway carbohydrate degradation; glycolysis; pyruvate from D-glyceraldehyde 3-phosphate: step 3/5. In terms of biological role, catalyzes the interconversion of 2-phosphoglycerate and 3-phosphoglycerate. This chain is 2,3-bisphosphoglycerate-dependent phosphoglycerate mutase, found in Burkholderia mallei (strain NCTC 10247).